A 92-amino-acid polypeptide reads, in one-letter code: C-C motif chemokine 4-like (92 aa).

An N-terminal signal peptide occupies residues M1–S23. 2 cysteine pairs are disulfide-bonded: C34-C58 and C35-C74.

Belongs to the intercrine beta (chemokine CC) family. In terms of assembly, interacts with CCR5. As to expression, detected in B-cells.

It localises to the secreted. In terms of biological role, chemokine that induces chemotaxis of cells expressing CCR5 or CCR1. Inhibits HIV replication in peripheral blood monocytes that express CCR5. The chain is C-C motif chemokine 4-like (CCL4L1) from Homo sapiens (Human).